The sequence spans 918 residues: Rap guanine nucleotide exchange factor 3 (918 aa).

Ser-79 is modified (phosphoserine). The region spanning 110–186 is the DEP domain; sequence ATYPTLIRDR…RDAQFYRFPG (77 aa). An interaction with PDE3B region spans residues 218-242; it reads TVALRKPPGQRTDEELDLIFEELLH. Residues 311–314 and 321–322 contribute to the 3',5'-cyclic AMP site; these read GQLA and RA. The interval 369 to 388 is disordered; that stretch reads TSQGAGPSRPPTPGRNRYTV. One can recognise an N-terminal Ras-GEF domain in the interval 384–521; the sequence is NRYTVMSGTP…EQYPERRRHH (138 aa). The segment at 398-422 is interaction with PDE3B; that stretch reads ELLLEAMRPDSSAHDPTETFLSDFL. Phosphoserine is present on residues Ser-531 and Ser-859. Positions 665-884 constitute a Ras-GEF domain; sequence SAKDLAGQLT…SRISTCSEQS (220 aa).

As to quaternary structure, interacts with PDE3B and PIK3R6; form a signaling complex that regulates phosphatidylinositol 3-kinase gamma in angiogenesis.

It is found in the cytoplasm. The protein resides in the membrane. Its function is as follows. Guanine nucleotide exchange factor (GEF) for RAP1A and RAP2A small GTPases that is activated by binding cAMP. Through simultaneous binding of PDE3B to RAPGEF3 and PIK3R6 is assembled in a signaling complex in which it activates the PI3K gamma complex and which is involved in angiogenesis. Plays a role in the modulation of the cAMP-induced dynamic control of endothelial barrier function through a pathway that is independent on Rho-mediated signaling. Required for the actin rearrangement at cell-cell junctions, such as stress fibers and junctional actin. The polypeptide is Rap guanine nucleotide exchange factor 3 (Rapgef3) (Mus musculus (Mouse)).